Here is a 330-residue protein sequence, read N- to C-terminus: 4,5-dihydroxyphthalate decarboxylase (330 aa).

This sequence to P.putida DHP decarboxylase.

It catalyses the reaction 4,5-dihydroxyphthalate + H(+) = 3,4-dihydroxybenzoate + CO2. Its pathway is xenobiotic degradation; phthalate degradation; 3,4-dihydroxybenzoate from phthalate: step 3/3. This chain is 4,5-dihydroxyphthalate decarboxylase (phtD), found in Comamonas testosteroni (Pseudomonas testosteroni).